A 211-amino-acid chain; its full sequence is Metalloproteinase inhibitor 3 (211 aa).

Residues 1–23 form the signal peptide; sequence MTPWLGLVVLLSCWSLGHWGAEA. Cysteine 24 provides a ligand contact to Zn(2+). Involved in metalloproteinase-binding stretches follow at residues 24–27 and 88–89; these read CTCS and ES. Disulfide bonds link cysteine 24–cysteine 91, cysteine 26–cysteine 118, cysteine 36–cysteine 143, cysteine 145–cysteine 192, cysteine 150–cysteine 155, and cysteine 163–cysteine 184. The NTR domain maps to 24–143; sequence CTCSPSHPQD…GLNYRYHLGC (120 aa). The segment at 105–188 is mediates interaction with EFEMP1; sequence TGRVYEGKMY…SKHYACIRQK (84 aa).

It belongs to the protease inhibitor I35 (TIMP) family. In terms of assembly, interacts with EFEMP1. Interacts with KDR. In terms of tissue distribution, highest levels are found in kidney, lung and brain followed by ovary and uterus. Low levels are found in bone.

It localises to the secreted. It is found in the extracellular space. The protein localises to the extracellular matrix. Its function is as follows. Mediates a variety of processes including matrix regulation and turnover, inflammation, and angiogenesis, through reversible inhibition of zinc protease superfamily enzymes, primarily matrix metalloproteinases (MMPs). Regulates extracellular matrix (ECM) remodeling through inhibition of matrix metalloproteinases (MMP) including MMP-1, MMP-2, MMP-3, MMP-7, MMP-9, MMP-13, MMP-14 and MMP-15. Additionally, modulates the processing of amyloid precursor protein (APP) and apolipoprotein E receptor ApoER2 by inhibiting two alpha-secretases ADAM10 and ADAM17. Functions as a tumor suppressor and a potent inhibitor of angiogenesis. Exerts its anti-angiogenic effect by directly interacting with vascular endothelial growth factor (VEGF) receptor-2/KDR, preventing its binding to the VEGFA ligand. Selectively induces apoptosis in angiogenic endothelial cells through a caspase-independent cell death pathway. Mechanistically, inhibits matrix-induced focal adhesion kinase PTK2 tyrosine phosphorylation and association with paxillin/PXN and disrupts the incorporation of ITGB3, PTK2 and PXN into focal adhesion contacts on the matrix. In Mus musculus (Mouse), this protein is Metalloproteinase inhibitor 3 (Timp3).